Here is a 342-residue protein sequence, read N- to C-terminus: viral G-protein coupled receptor (342 aa).

Topologically, residues 1–51 (MAAEDFLTIFLDDDESWNETLNMSGYDYSGNFSLEVSVCEMTTVVPYTWNV) are extracellular. N-linked (GlcNAc...) asparagine; by host glycans are attached at residues N18, N22, and N31. A helical membrane pass occupies residues 52-72 (GILSLIFLINVLGNGLVTYIF). Residues 73-92 (CKHRSRAGAIDILLLGICLN) lie on the Cytoplasmic side of the membrane. Residues 93-113 (SLCLSISLLAEVLMFLFPNII) traverse the membrane as a helical segment. At 114 to 121 (STGLCRLE) the chain is on the extracellular side. The chain crosses the membrane as a helical span at residues 122-142 (IFFYYLYVYLDIFSVVCVSLV). The Cytoplasmic portion of the chain corresponds to 143-159 (RYLLVAYSTRSWPKKQS). A helical transmembrane segment spans residues 160-180 (LGWVLTSAALLIALVLSGDAC). At 181 to 217 (RHRSRVVDPVSKQAMCYENAGNMTADWRLHVRTVSVT) the chain is on the extracellular side. Residues 218–238 (AGFLLPLALLILFYALTWCVV) traverse the membrane as a helical segment. Over 239–251 (RRTKLQARRKVRG) the chain is Cytoplasmic. A helical transmembrane segment spans residues 252–272 (VIVAVVLLFFVFCFPYHVLNL). Topologically, residues 273–293 (LDTLLRRRWIRDSCYTRGLIN) are extracellular. The chain crosses the membrane as a helical span at residues 294 to 314 (VGLAVTSLLQALYSAVVPLIY). The Cytoplasmic portion of the chain corresponds to 315–342 (SCLGSLFRQRMYGLFQSLRQSFMSGATT).

Belongs to the G-protein coupled receptor 1 family. As to quaternary structure, interacts with protein K7; this interaction promotes vGPCR proteasomal degradation. Interacts with host CADM1; this interaction is essential for chronic NF-kappa-B activation.

Its subcellular location is the host cell membrane. Functionally, receptor that signals constitutively via several signaling pathways including PI3K/AKT as well as mitogen- and stress-activated/MAP kinases. Promotes host cell proliferation and survival, modulates cell migration, stimulates angiogenesis, and recruits inflammatory cells, both in expressing cells and in neighboring cells. Maintains chronic activation of NF-kappa-B via interaction with host CADM1. The chain is viral G-protein coupled receptor (ORF74) from Human herpesvirus 8 type P (isolate GK18) (HHV-8).